The following is a 91-amino-acid chain: Bacterial microcompartment shell vertex protein PduN (91 aa).

Residues 1–87 (MHLARVTGAV…IDLAVVGIVD (87 aa)) enclose the BMV domain.

Belongs to the CcmL/EutN family. As to quaternary structure, homopentamer. Interacts with shell protein PduA.

Its subcellular location is the bacterial microcompartment. It participates in polyol metabolism; 1,2-propanediol degradation. In terms of biological role, probably forms vertices in the shell of the bacterial microcompartment (BMC) dedicated to 1,2-propanediol (1,2-PD) degradation. Required for structural integrity of BMCs and to mitigate propionaldehyde toxicity. Its function is as follows. The 1,2-PD-specific bacterial microcompartment (BMC) concentrates low levels of 1,2-PD catabolic enzymes, concentrates volatile reaction intermediates thus enhancing pathway flux and keeps the level of toxic, mutagenic propionaldehyde low. The sequence is that of Bacterial microcompartment shell vertex protein PduN from Salmonella typhimurium (strain LT2 / SGSC1412 / ATCC 700720).